Here is a 264-residue protein sequence, read N- to C-terminus: uncharacterized protein (264 aa).

13 to 20 (TGSTSGIG) provides a ligand contact to NADP(+). Serine 141 is a substrate binding site. The active-site Proton acceptor is the tyrosine 154.

The protein belongs to the short-chain dehydrogenases/reductases (SDR) family.

This is an uncharacterized protein from Bacillus subtilis (strain 168).